Consider the following 3412-residue polypeptide: Genome polyprotein (3412 aa).

Over 1-104 the chain is Cytoplasmic; sequence MSGRKAQGKT…LSSRKRRSNE (104 aa). Residues 38–72 are hydrophobic; homodimerization of capsid protein C; it reads PGPSRGVQGFIFFFLFNILTGKKLTAHLKKLWRML. The propeptide at 102–121 is ER anchor for the capsid protein C, removed in mature form by serine protease NS3; it reads SNEMALFPLLLLGLLALSGG. A helical membrane pass occupies residues 105–125; that stretch reads MALFPLLLLGLLALSGGVTLV. Topologically, residues 126-244 are extracellular; that stretch reads RKNRWLLLNV…GERQLQKIER (119 aa). N-linked (GlcNAc...) asparagine; by host glycans are attached at residues asparagine 134 and asparagine 150. A helical transmembrane segment spans residues 245 to 265; that stretch reads WLVRNPFFAVTALAIAYLVGN. Over 266–270 the chain is Cytoplasmic; the sequence is NTTQR. Residues 271-285 traverse the membrane as a helical segment; it reads VVIALLVLAVGPAYS. Over 286 to 730 the chain is Extracellular; that stretch reads AHCIGITDRD…TVFGSAFQGL (445 aa). 8 disulfides stabilise this stretch: cysteine 288/cysteine 315, cysteine 345/cysteine 401, cysteine 345/cysteine 406, cysteine 359/cysteine 390, cysteine 377/cysteine 401, cysteine 377/cysteine 406, cysteine 467/cysteine 568, and cysteine 585/cysteine 615. A fusion peptide region spans residues 383–396; it reads DRGWGNGCGLFGKG. The chain crosses the membrane as a helical span at residues 731 to 751; sequence FGGLSWITKVIMGAVLIWVGI. Over 752–757 the chain is Extracellular; the sequence is NTRNMT. A helical membrane pass occupies residues 758-778; sequence MSMSMILVGVIMMFLSLGVGA. Over 779 to 1132 the chain is Extracellular; sequence DQGCAVNFGK…LVRSWVTAGE (354 aa). 6 cysteine pairs are disulfide-bonded: cysteine 782–cysteine 793, cysteine 833–cysteine 921, cysteine 957–cysteine 1002, cysteine 1058–cysteine 1107, cysteine 1069–cysteine 1091, and cysteine 1090–cysteine 1094. Asparagine 908 and asparagine 986 each carry an N-linked (GlcNAc...) asparagine; by host glycan. A helical transmembrane segment spans residues 1133–1153; it reads VHAVPFGLVSMMIAMEVVLRR. Residues 1154–1201 lie on the Cytoplasmic side of the membrane; that stretch reads RQGPKQMLVGGVVLLGAMLVGQVTVLDLVKFVVAVGLHFHEINNGGDA. A helical transmembrane segment spans residues 1202–1222; the sequence is MYMALIASFSIRPGLLMGFGL. The Lumenal segment spans residues 1223–1287; the sequence is RTLWSPRERL…ILPLMALMTP (65 aa). The chain crosses the membrane as a helical span at residues 1288 to 1308; that stretch reads MTMHEVRMATMLFCTVVIIGV. Residues 1309-1355 lie on the Cytoplasmic side of the membrane; sequence LHQNSKDTSMQKTIPIVALTLTSYMGLTQPFLGLCAYMSTQVFGRRS. A helical membrane pass occupies residues 1356–1376; the sequence is IPVNEALAAAGLVGVLAGLAF. Over 1377-1378 the chain is Lumenal; that stretch reads QD. A helical membrane pass occupies residues 1379-1399; that stretch reads MENFLGPIAVGGILMMLVSVA. The Cytoplasmic portion of the chain corresponds to 1400-1456; it reads GRVDGLELKKLGEISWEEEAEISGSSSRYDVALSEQGEFKLLSEDKVPWDQIVMTSL. The segment at 1407 to 1446 is interacts with and activates NS3 protease; sequence LKKLGEISWEEEAEISGSSSRYDVALSEQGEFKLLSEDKV. An intramembrane region (helical) is located at residues 1457-1477; sequence ALVGAAIHPFALLLVLGGWIL. Residues 1478 to 2157 are Cytoplasmic-facing; it reads HIKGARRSGD…RNALSMMPEA (680 aa). In terms of domain architecture, Peptidase S7 spans 1485-1665; it reads SGDVLWDIPT…ELKEESKEEL (181 aa). Residues histidine 1537, aspartate 1561, and serine 1622 each act as charge relay system; for serine protease NS3 activity in the active site. Positions 1669 to 1825 constitute a Helicase ATP-binding domain; the sequence is PTMLKKGMTT…HSNGEIEDVQ (157 aa). The interval 1673–1676 is important for RNA-binding; sequence KKGM. 1682 to 1689 is an ATP binding site; it reads FHPGAGKT. A DEAH box motif is present at residues 1773-1776; the sequence is DEAH. In terms of domain architecture, Helicase C-terminal spans 1836–1997; sequence GHEWILADKR…VRGGMVAPLY (162 aa). Lysine 1877 is modified (N6-acetyllysine; by host). Positions 1942–1963 are disordered; sequence AAQRRGRIGRNPNRDGDSYYYS. A helical transmembrane segment spans residues 2158–2178; sequence MTIVMLFLLAGLLTSGAVIFF. At 2179–2186 the chain is on the lumenal side; the sequence is MSPKGMSR. Positions 2187-2207 form an intramembrane region, helical; sequence MSMAMGTMAGSGYLMFLGGVK. Residues 2208–2209 lie on the Lumenal side of the membrane; that stretch reads PT. The chain crosses the membrane as a helical span at residues 2210–2230; the sequence is HISYVMLIFFVLMVVVIPEPG. Over 2231–2241 the chain is Cytoplasmic; it reads QQRTIQDNQVA. A helical membrane pass occupies residues 2242-2262; the sequence is YLIIGILTLLSVVAANELGML. Over 2263-2293 the chain is Lumenal; that stretch reads EKTKEDFFGKRDITTPSGAIPWSWPDLDLKP. An intramembrane region (helical) is located at residues 2294–2314; sequence GAAWTVYVGIVTMLSPMLHHW. Topologically, residues 2315-2360 are lumenal; the sequence is IKVEYGNLSLSGIAQSASVLSFMDKGIPFMKMNISVVILLVSGWNS. Residues 2361–2380 traverse the membrane as a helical segment; that stretch reads ITVIPLLCGIGGAMLHWTLI. Residues 2381–2421 lie on the Cytoplasmic side of the membrane; sequence LPGIKAQQSKLAQKRVFHGVAKNPVVDGNPTADIEEAPEMP. Residues 2422 to 2442 form a helical membrane-spanning segment; it reads ALYEKKLALYLLLALSLMSVA. The Lumenal portion of the chain corresponds to 2443–2445; that stretch reads MCR. Residues 2446 to 2466 form a helical membrane-spanning segment; that stretch reads TPFSLAEGIVLSSAALGPLIE. Residues 2467–3411 lie on the Cytoplasmic side of the membrane; sequence GNTSLLWNGP…VDADLQPGEL (945 aa). An mRNA cap 0-1 NS5-type MT domain is found at 2508–2772; sequence GSASGKTLGE…DVILPIGTRS (265 aa). S-adenosyl-L-methionine is bound at residue serine 2563. Serine 2563 is subject to Phosphoserine. The active-site For 2'-O-MTase activity is lysine 2568. Glycine 2593, tryptophan 2594, threonine 2611, leucine 2612, aspartate 2638, and valine 2639 together coordinate S-adenosyl-L-methionine. The active-site For 2'-O-MTase activity is aspartate 2653. Isoleucine 2654 contributes to the S-adenosyl-L-methionine binding site. Active-site for 2'-O-MTase activity residues include lysine 2689 and glutamate 2725. An S-adenosyl-L-methionine-binding site is contributed by tyrosine 2727. A Nuclear localization signal motif is present at residues 2879-2912; the sequence is RKIMKVVNRWLFRHLSREKNPRLCTKEEFIAKVR. Zn(2+) is bound by residues glutamate 2946, histidine 2950, cysteine 2955, and cysteine 2958. In terms of domain architecture, RdRp catalytic spans 3036 to 3188; it reads GGFYADDTAG…RPVDDRFGLA (153 aa). The Zn(2+) site is built by histidine 3223, cysteine 3239, and cysteine 3358.

It in the N-terminal section; belongs to the class I-like SAM-binding methyltransferase superfamily. mRNA cap 0-1 NS5-type methyltransferase family. In terms of assembly, homodimer. Interacts (via N-terminus) with host EXOC1 (via C-terminus); this interaction results in EXOC1 degradation through the proteasome degradation pathway. As to quaternary structure, forms heterodimers with envelope protein E in the endoplasmic reticulum and Golgi. Homodimer; in the endoplasmic reticulum and Golgi. Interacts with protein prM. Interacts with non-structural protein 1. In terms of assembly, homodimer; Homohexamer when secreted. Interacts with envelope protein E. As to quaternary structure, interacts (via N-terminus) with serine protease NS3. Forms a heterodimer with serine protease NS3. May form homooligomers. In terms of assembly, forms a heterodimer with NS2B. Interacts with non-structural protein 2A (via N-terminus). Interacts with NS4B. Interacts with unphosphorylated RNA-directed RNA polymerase NS5; this interaction stimulates RNA-directed RNA polymerase NS5 guanylyltransferase activity. NS3 interacts with host PDCD6IP; this interaction contributes to virion release. As to quaternary structure, interacts with serine protease NS3. Homodimer. Interacts with host STAT2; this interaction prevents the establishment of cellular antiviral state. Interacts with serine protease NS3. Interacts with host TRIM23; this interaction leads to NS5 ubiquitination. In terms of processing, specific enzymatic cleavages in vivo yield mature proteins. The nascent capsid protein C contains a C-terminal hydrophobic domain that act as a signal sequence for translocation of prM into the lumen of the ER. Mature capsid protein C is cleaved at a site upstream of this hydrophobic domain by NS3. prM is cleaved in post-Golgi vesicles by a host furin, releasing the mature small envelope protein M, and peptide pr. Non-structural protein 2A-alpha, a C-terminally truncated form of non-structural protein 2A, results from partial cleavage by NS3. Specific enzymatic cleavages in vivo yield mature proteins peptide 2K acts as a signal sequence and is removed from the N-terminus of NS4B by the host signal peptidase in the ER lumen. Signal cleavage at the 2K-4B site requires a prior NS3 protease-mediated cleavage at the 4A-2K site. Cleaved in post-Golgi vesicles by a host furin, releasing the mature small envelope protein M, and peptide pr. This cleavage is incomplete as up to 30% of viral particles still carry uncleaved prM. Post-translationally, N-glycosylated. In terms of processing, N-glycosylated. The excreted form is glycosylated and this is required for efficient secretion of the protein from infected cells. Polyubiquitinated; ubiquitination is probably mediated by host TRIM23 and is prerequisite for NS5-STAT2 interaction. NS5 is not ISGylated or sumoylated. Post-translationally, acetylated by host KAT5. Acetylation modulates NS3 RNA-binding and unwinding activities and plays an important positive role for viral replication. In terms of processing, phosphorylated on serines residues. This phosphorylation may trigger NS5 nuclear localization.

The protein resides in the virion. It localises to the host nucleus. It is found in the host cytoplasm. The protein localises to the host perinuclear region. Its subcellular location is the secreted. The protein resides in the virion membrane. It localises to the host endoplasmic reticulum membrane. The catalysed reaction is Selective hydrolysis of -Xaa-Xaa-|-Yaa- bonds in which each of the Xaa can be either Arg or Lys and Yaa can be either Ser or Ala.. The enzyme catalyses RNA(n) + a ribonucleoside 5'-triphosphate = RNA(n+1) + diphosphate. It carries out the reaction a ribonucleoside 5'-triphosphate + H2O = a ribonucleoside 5'-diphosphate + phosphate + H(+). It catalyses the reaction ATP + H2O = ADP + phosphate + H(+). The catalysed reaction is a 5'-end (5'-triphosphoguanosine)-ribonucleoside in mRNA + S-adenosyl-L-methionine = a 5'-end (N(7)-methyl 5'-triphosphoguanosine)-ribonucleoside in mRNA + S-adenosyl-L-homocysteine. The enzyme catalyses a 5'-end (N(7)-methyl 5'-triphosphoguanosine)-ribonucleoside in mRNA + S-adenosyl-L-methionine = a 5'-end (N(7)-methyl 5'-triphosphoguanosine)-(2'-O-methyl-ribonucleoside) in mRNA + S-adenosyl-L-homocysteine + H(+). Its function is as follows. Plays a role in virus budding by binding to the cell membrane and gathering the viral RNA into a nucleocapsid that forms the core of a mature virus particle. During virus entry, may induce genome penetration into the host cytoplasm after hemifusion induced by the surface proteins. Can migrate to the cell nucleus where it modulates host functions. In terms of biological role, inhibits RNA silencing by interfering with host Dicer. Functionally, prevents premature fusion activity of envelope proteins in trans-Golgi by binding to envelope protein E at pH6.0. After virion release in extracellular space, gets dissociated from E dimers. Acts as a chaperone for envelope protein E during intracellular virion assembly by masking and inactivating envelope protein E fusion peptide. prM is the only viral peptide matured by host furin in the trans-Golgi network probably to avoid catastrophic activation of the viral fusion activity in acidic Golgi compartment prior to virion release. prM-E cleavage is inefficient, and many virions are only partially matured. These uncleaved prM would play a role in immune evasion. Its function is as follows. May play a role in virus budding. Exerts cytotoxic effects by activating a mitochondrial apoptotic pathway through M ectodomain. May display a viroporin activity. In terms of biological role, binds to host cell surface receptor and mediates fusion between viral and cellular membranes. Envelope protein is synthesized in the endoplasmic reticulum in the form of heterodimer with protein prM. They play a role in virion budding in the ER, and the newly formed immature particle is covered with 60 spikes composed of heterodimer between precursor prM and envelope protein E. The virion is transported to the Golgi apparatus where the low pH causes dissociation of PrM-E heterodimers and formation of E homodimers. prM-E cleavage is inefficient, and many virions are only partially matured. These uncleaved prM would play a role in immune evasion. Functionally, involved in immune evasion, pathogenesis and viral replication. Once cleaved off the polyprotein, is targeted to three destinations: the viral replication cycle, the plasma membrane and the extracellular compartment. Essential for viral replication. Required for formation of the replication complex and recruitment of other non-structural proteins to the ER-derived membrane structures. Excreted as a hexameric lipoparticle that plays a role against host immune response. Antagonizing the complement function. Binds to the host macrophages and dendritic cells. Inhibits signal transduction originating from Toll-like receptor 3 (TLR3). Component of the viral RNA replication complex that functions in virion assembly and antagonizes the host immune response. Its function is as follows. Required cofactor for the serine protease function of NS3. May have membrane-destabilizing activity and form viroporins. In terms of biological role, displays three enzymatic activities: serine protease, NTPase and RNA helicase. NS3 serine protease, in association with NS2B, performs its autocleavage and cleaves the polyprotein at dibasic sites in the cytoplasm: C-prM, NS2A-NS2B, NS2B-NS3, NS3-NS4A, NS4A-2K and NS4B-NS5. NS3 RNA helicase binds RNA and unwinds dsRNA in the 3' to 5' direction. Also plays a role in virus assembly. Functionally, regulates the ATPase activity of the NS3 helicase activity. NS4A allows NS3 helicase to conserve energy during unwinding. Functions as a signal peptide for NS4B and is required for the interferon antagonism activity of the latter. Its function is as follows. Induces the formation of ER-derived membrane vesicles where the viral replication takes place. Inhibits interferon (IFN)-induced host STAT1 phosphorylation and nuclear translocation, thereby preventing the establishment of cellular antiviral state by blocking the IFN-alpha/beta pathway. In terms of biological role, replicates the viral (+) and (-) RNA genome, and performs the capping of genomes in the cytoplasm. NS5 methylates viral RNA cap at guanine N-7 and ribose 2'-O positions. Besides its role in RNA genome replication, also prevents the establishment of cellular antiviral state by blocking the interferon-alpha/beta (IFN-alpha/beta) signaling pathway. IFN-I induces binding of NS5 to host IFN-activated transcription factor STAT2, preventing its transcriptional activity. Host TRIM23 is the E3 ligase that interacts with and polyubiquitinates NS5 to promote its binding to STAT2 and trigger IFN-I signaling inhibition. The chain is Genome polyprotein from Aedes aegypti (Yellowfever mosquito).